Here is a 115-residue protein sequence, read N- to C-terminus: Ribonuclease P protein component (115 aa).

Belongs to the RnpA family. Consists of a catalytic RNA component (M1 or rnpB) and a protein subunit.

The enzyme catalyses Endonucleolytic cleavage of RNA, removing 5'-extranucleotides from tRNA precursor.. Functionally, RNaseP catalyzes the removal of the 5'-leader sequence from pre-tRNA to produce the mature 5'-terminus. It can also cleave other RNA substrates such as 4.5S RNA. The protein component plays an auxiliary but essential role in vivo by binding to the 5'-leader sequence and broadening the substrate specificity of the ribozyme. This chain is Ribonuclease P protein component, found in Buchnera aphidicola subsp. Acyrthosiphon pisum (strain APS) (Acyrthosiphon pisum symbiotic bacterium).